A 236-amino-acid polypeptide reads, in one-letter code: 2-C-methyl-D-erythritol 4-phosphate cytidylyltransferase (236 aa).

The protein belongs to the IspD/TarI cytidylyltransferase family. IspD subfamily. Homodimer.

It carries out the reaction 2-C-methyl-D-erythritol 4-phosphate + CTP + H(+) = 4-CDP-2-C-methyl-D-erythritol + diphosphate. It functions in the pathway isoprenoid biosynthesis; isopentenyl diphosphate biosynthesis via DXP pathway; isopentenyl diphosphate from 1-deoxy-D-xylulose 5-phosphate: step 2/6. Its function is as follows. Catalyzes the formation of 4-diphosphocytidyl-2-C-methyl-D-erythritol from CTP and 2-C-methyl-D-erythritol 4-phosphate (MEP). This is 2-C-methyl-D-erythritol 4-phosphate cytidylyltransferase from Escherichia fergusonii (strain ATCC 35469 / DSM 13698 / CCUG 18766 / IAM 14443 / JCM 21226 / LMG 7866 / NBRC 102419 / NCTC 12128 / CDC 0568-73).